We begin with the raw amino-acid sequence, 328 residues long: Malate dehydrogenase (328 aa).

13 to 19 lines the NAD(+) pocket; sequence GGKGQIA. Residues arginine 94 and arginine 100 each contribute to the substrate site. Residues asparagine 107, glutamine 114, and 131–133 each bind NAD(+); that span reads VGN. Substrate contacts are provided by asparagine 133 and arginine 164. Histidine 189 (proton acceptor) is an active-site residue.

This sequence belongs to the LDH/MDH superfamily. MDH type 2 family.

The catalysed reaction is (S)-malate + NAD(+) = oxaloacetate + NADH + H(+). Its function is as follows. Catalyzes the reversible oxidation of malate to oxaloacetate. In Chlamydia pneumoniae (Chlamydophila pneumoniae), this protein is Malate dehydrogenase.